The sequence spans 874 residues: Coatomer subunit gamma-1 (874 aa).

A compositionally biased stretch (basic and acidic residues) spans 1 to 11 (MLKKFDKKDEE). Positions 1 to 21 (MLKKFDKKDEESGGGSNPFQH) are disordered. HEAT repeat units lie at residues 64-101 (TEAT…IAED), 283-320 (KELA…KHPS), 322-355 (VTAC…GSES), and 356-392 (SIDR…KYPR). Thr-594 bears the Phosphothreonine mark. Residues 609 to 874 (RQEIFQEQLA…PVDIILASVG (266 aa)) form an interaction with ZNF289/ARFGAP2 region.

It belongs to the COPG family. In terms of assembly, oligomeric complex that consists of at least the alpha, beta, beta', gamma, delta, epsilon and zeta subunits. Interacts with ZNF289/ARFGAP2 through its C-terminal appendage domain. Interacts with EGFR upon EGF treatment; interaction is essential for regulation of EGF-dependent nuclear transport of EGFR by retrograde trafficking from the Golgi to the ER. The coatomer interacts with KDEL receptors; the interaction is important for retrograde trafficking of KDEL-bearing proteins from the Golgi to the endoplasmic reticulum. Interacts with COPB1. Interacts with TMED10 (via C-terminus). Interacts with TMED2, TMED3, TMED7 and TMED9.

It is found in the cytoplasm. The protein localises to the golgi apparatus membrane. It localises to the cytoplasmic vesicle. The protein resides in the COPI-coated vesicle membrane. The coatomer is a cytosolic protein complex that binds to dilysine motifs and reversibly associates with Golgi non-clathrin-coated vesicles, which further mediate biosynthetic protein transport from the ER, via the Golgi up to the trans Golgi network. Coatomer complex is required for budding from Golgi membranes, and is essential for the retrograde Golgi-to-ER transport of dilysine-tagged proteins. In mammals, the coatomer can only be recruited by membranes associated to ADP-ribosylation factors (ARFs), which are small GTP-binding proteins; the complex also influences the Golgi structural integrity, as well as the processing, activity, and endocytic recycling of LDL receptors. Required for limiting lipid storage in lipid droplets. Involved in lipid homeostasis by regulating the presence of perilipin family members PLIN2 and PLIN3 at the lipid droplet surface and promoting the association of adipocyte triglyceride lipase (PNPLA2) with the lipid droplet surface to mediate lipolysis. This chain is Coatomer subunit gamma-1 (COPG1), found in Homo sapiens (Human).